Reading from the N-terminus, the 372-residue chain is Geranylgeranyl pyrophosphate synthase 4 (372 aa).

The first 22 residues, methionine 1–threonine 22, serve as a signal peptide directing secretion. Positions 121, 124, and 153 each coordinate isopentenyl diphosphate. 2 residues coordinate Mg(2+): aspartate 160 and aspartate 166. Arginine 171 is a dimethylallyl diphosphate binding site. Arginine 172 contacts isopentenyl diphosphate. Residues lysine 257, threonine 258, glutamine 295, lysine 312, and lysine 322 each contribute to the dimethylallyl diphosphate site.

The protein belongs to the FPP/GGPP synthase family. As to quaternary structure, monomer. Mg(2+) is required as a cofactor. In terms of tissue distribution, faintly expressed in flowers. Expressed in roots and siliques.

The protein localises to the endoplasmic reticulum. The enzyme catalyses isopentenyl diphosphate + dimethylallyl diphosphate = (2E)-geranyl diphosphate + diphosphate. It carries out the reaction isopentenyl diphosphate + (2E)-geranyl diphosphate = (2E,6E)-farnesyl diphosphate + diphosphate. The catalysed reaction is isopentenyl diphosphate + (2E,6E)-farnesyl diphosphate = (2E,6E,10E)-geranylgeranyl diphosphate + diphosphate. The protein operates within isoprenoid biosynthesis; farnesyl diphosphate biosynthesis; farnesyl diphosphate from geranyl diphosphate and isopentenyl diphosphate: step 1/1. Its pathway is isoprenoid biosynthesis; geranyl diphosphate biosynthesis; geranyl diphosphate from dimethylallyl diphosphate and isopentenyl diphosphate: step 1/1. It participates in isoprenoid biosynthesis; geranylgeranyl diphosphate biosynthesis; geranylgeranyl diphosphate from farnesyl diphosphate and isopentenyl diphosphate: step 1/1. Its function is as follows. Catalyzes the trans-addition of the three molecules of isopentenyl diphosphate (IPP) onto dimethylallyl diphosphate (DMAPP) to form geranylgeranyl diphosphate. This Arabidopsis thaliana (Mouse-ear cress) protein is Geranylgeranyl pyrophosphate synthase 4.